The following is a 319-amino-acid chain: Curved DNA-binding protein (319 aa).

The region spanning 5–69 is the J domain; that stretch reads DYYKILGVEP…QKRAEFDEIR (65 aa).

The protein localises to the cytoplasm. Its subcellular location is the nucleoid. In terms of biological role, DNA-binding protein that preferentially recognizes a curved DNA sequence. It is probably a functional analog of DnaJ; displays overlapping activities with DnaJ, but functions under different conditions, probably acting as a molecular chaperone in an adaptive response to environmental stresses other than heat shock. Lacks autonomous chaperone activity; binds native substrates and targets them for recognition by DnaK. Its activity is inhibited by the binding of CbpM. The polypeptide is Curved DNA-binding protein (Pseudomonas putida (strain ATCC 700007 / DSM 6899 / JCM 31910 / BCRC 17059 / LMG 24140 / F1)).